A 264-amino-acid polypeptide reads, in one-letter code: Small ribosomal subunit protein uS2 (264 aa).

Residues 225–264 form a disordered region; that stretch reads GKKAREERQLAAAKDAAGDAKPEAEEAPVAAEAEEAPAAE.

It belongs to the universal ribosomal protein uS2 family.

This Corynebacterium glutamicum (strain R) protein is Small ribosomal subunit protein uS2.